The primary structure comprises 134 residues: Putative integral membrane protein YxzK (134 aa).

Helical transmembrane passes span 3-23 (VIRI…GEAI), 35-55 (IVGL…VSII), 58-78 (GAGF…TGVI), and 89-109 (LMLL…AGFA).

It is found in the cell membrane. The chain is Putative integral membrane protein YxzK (yxzK) from Bacillus subtilis (strain 168).